Consider the following 1016-residue polypeptide: KN motif and ankyrin repeat domain-containing protein 4 (1016 aa).

Disordered regions lie at residues 1-26 (MEKI…YPYS), 70-91 (PRNF…QQNW), 235-259 (AEPE…AVQS), 401-485 (LSQE…LPRG), 506-563 (EEGS…SPQD), and 622-755 (AQAP…VSHL). Polar residues-rich tracts occupy residues 70–80 (PRNFSLPNSGD) and 246–258 (SHLS…SAVQ). The stretch at 346–409 (SSLKNQVLAL…KLSQERASEA (64 aa)) forms a coiled coil. Composition is skewed to basic and acidic residues over residues 401-414 (LSQE…DRTD) and 445-454 (PECRAPRAEK). Residues 460–469 (VQNNHKQSYP) show a composition bias toward polar residues. A compositionally biased stretch (pro residues) spans 632–650 (TPAPPPSTPPPPPPPPPEI). The residue at position 639 (Thr639) is a Phosphothreonine. Over residues 695–708 (TSGEDSSPEDLSDS) the composition is skewed to acidic residues. 2 stretches are compositionally biased toward basic and acidic residues: residues 709–727 (ETEK…DLHP) and 745–755 (TSDRGEEVSHL). 5 ANK repeats span residues 838-868 (SGNT…NVDH), 877-905 (VMIT…NVNI), 910-939 (GGQT…DVNL), 943-973 (DGSS…NSSL), and 977-1007 (AGRT…PGRS).

Its subcellular location is the cytoplasm. In terms of biological role, may be involved in the control of cytoskeleton formation by regulating actin polymerization. This chain is KN motif and ankyrin repeat domain-containing protein 4 (Kank4), found in Mus musculus (Mouse).